Consider the following 186-residue polypeptide: Ribosome-recycling factor (186 aa).

The protein belongs to the RRF family.

It is found in the cytoplasm. In terms of biological role, responsible for the release of ribosomes from messenger RNA at the termination of protein biosynthesis. May increase the efficiency of translation by recycling ribosomes from one round of translation to another. This Allorhizobium ampelinum (strain ATCC BAA-846 / DSM 112012 / S4) (Agrobacterium vitis (strain S4)) protein is Ribosome-recycling factor.